The following is a 376-amino-acid chain: C2H2 type master regulator of conidiophore development brlA (376 aa).

A compositionally biased stretch (low complexity) spans 20–29 (TSFSSASSSA). Disordered stretches follow at residues 20–47 (TSFS…ELSL), 197–229 (HHHH…ASPN), and 241–267 (EAQR…PESG). The segment covering 34 to 44 (TPSSRRSTPNE) has biased composition (polar residues). A compositionally biased stretch (basic residues) spans 197 to 209 (HHHHHNHHQHHHA). The span at 219 to 229 (QLHSNTGASPN) shows a compositional bias: polar residues. Residues 241–256 (EAQRKTSELQRAQIRE) are compositionally biased toward basic and acidic residues. Residues 277 to 301 (CKCDYPGCNKAFRRNEHLKRHKQTF) form a C2H2-type 1; degenerate zinc finger. The C2H2-type 2 zinc finger occupies 309–332 (FSCEFCGKDQFNRQDNLNNHRKLH). The tract at residues 351–376 (IIEHEERSRKRRAPPKSKAEKRDYDF) is disordered. Basic and acidic residues predominate over residues 367–376 (SKAEKRDYDF).

The protein localises to the nucleus. BrlA, abaA and wetA are pivotal regulators of conidiophore development and conidium maturation. They act individually and together to regulate their own expression and that of numerous other sporulation-specific genes. Binds promoters of target genes at brlA response elements (BREs) containing the conserved sequence 5'-(C/A)(A/G)AGGG(G/A)-3'. This chain is C2H2 type master regulator of conidiophore development brlA, found in Hapsidospora chrysogena (Acremonium chrysogenum).